We begin with the raw amino-acid sequence, 289 residues long: Glycine--tRNA ligase alpha subunit (289 aa).

Belongs to the class-II aminoacyl-tRNA synthetase family. Tetramer of two alpha and two beta subunits.

It localises to the cytoplasm. It catalyses the reaction tRNA(Gly) + glycine + ATP = glycyl-tRNA(Gly) + AMP + diphosphate. The protein is Glycine--tRNA ligase alpha subunit of Prochlorococcus marinus subsp. pastoris (strain CCMP1986 / NIES-2087 / MED4).